The primary structure comprises 582 residues: Leucine-rich repeat transmembrane neuronal protein 3 (582 aa).

A signal peptide spans 1-30 (MGFNVIRLLRGSAVAVVLAPTVLLTMLSSA). The LRRNT domain maps to 31–61 (ERGCPKGCRCEGKMVYCESQKLQEIPSSISA). The Extracellular segment spans residues 31 to 420 (ERGCPKGCRC…VDTEHISFHK (390 aa)). 10 LRR repeats span residues 63-83 (CLGL…QFKG), 86-107 (QLTW…AFNG), 110-131 (RLKE…TFRP), 134-155 (NLRN…QFRG), 158-179 (KLLS…IFQD), 182-203 (NLEL…VFAG), 206-226 (RLKE…ALFP), 230-251 (SLQN…MSWT), 254-275 (SLQR…SVFQ), and 279-300 (NLQR…ILDS). N-linked (GlcNAc...) asparagine glycosylation occurs at Asn126. One can recognise an LRRCT domain in the interval 312-363 (NIWECSRNICSLVNWLRSFKGLRENTIICASPKELQGVNVIDAVKNYSICGK). The N-linked (GlcNAc...) asparagine glycan is linked to Asn357. Residues 378-410 (KPTFKPKLPRPKHESKPPLPPTVGATEPSPETD) are disordered. A helical membrane pass occupies residues 421-441 (IIAGSVALFLSVLVILLVMYV). Residues 442-582 (SWKRYPASMK…RISDHKPQLA (141 aa)) lie on the Cytoplasmic side of the membrane.

The protein belongs to the LRRTM family. Expressed in neuronal tissues.

It localises to the cell membrane. The protein localises to the postsynaptic cell membrane. In terms of biological role, may play a role in the development and maintenance of the vertebrate nervous system. Exhibits a limited synaptogenic activity in vitro, restricted to excitatory presynaptic differentiation. This is Leucine-rich repeat transmembrane neuronal protein 3 (Lrrtm3) from Mus musculus (Mouse).